Consider the following 402-residue polypeptide: Elongation factor Tu (402 aa).

Residues Lys16–Val211 form the tr-type G domain. Residues Gly25–Thr32 are G1. Position 25–32 (Gly25–Thr32) interacts with GTP. Position 32 (Thr32) interacts with Mg(2+). The G2 stretch occupies residues Gly66–Asn70. Residues Asp87–Gly90 are G3. Residues Asp87 to His91 and Asn142 to Asp145 contribute to the GTP site. The G4 stretch occupies residues Asn142 to Asp145. The G5 stretch occupies residues Ser181–Arg183.

It belongs to the TRAFAC class translation factor GTPase superfamily. Classic translation factor GTPase family. EF-Tu/EF-1A subfamily. In terms of assembly, monomer.

Its subcellular location is the cytoplasm. It catalyses the reaction GTP + H2O = GDP + phosphate + H(+). In terms of biological role, GTP hydrolase that promotes the GTP-dependent binding of aminoacyl-tRNA to the A-site of ribosomes during protein biosynthesis. This Mesomycoplasma hyopneumoniae (strain J / ATCC 25934 / NCTC 10110) (Mycoplasma hyopneumoniae) protein is Elongation factor Tu.